The chain runs to 470 residues: Maltose fermentation regulatory protein YPR196W (470 aa).

The segment at residues 8 to 34 (CDCCRVRRVKCDRNRPCDRCRQRNLRC) is a DNA-binding region (zn(2)-C6 fungal-type). Positions 41–49 (RKRGPKSIG) match the Nuclear localization signal motif.

It belongs to the MAL13 family.

It is found in the nucleus. May regulate the transcription of maltase and maltose permease genes. The chain is Maltose fermentation regulatory protein YPR196W from Saccharomyces cerevisiae (strain ATCC 204508 / S288c) (Baker's yeast).